Consider the following 488-residue polypeptide: Endoglucanase A (488 aa).

Residues histidine 59, 63–64 (WY), tyrosine 90, and histidine 125 each bind substrate. Glutamate 163 serves as the catalytic Proton donor. Tyrosine 226 provides a ligand contact to substrate. Glutamate 252 acts as the Nucleophile in catalysis. Substrate is bound by residues 258–259 (AT), tryptophan 286, and 291–293 (KDE). Disordered stretches follow at residues 326-362 (ESAS…AWDP) and 388-451 (EPGA…WDPT). 2 stretches are compositionally biased toward pro residues: residues 332 to 353 (PSDP…PPSD) and 405 to 416 (PSEPSDPPPPSE). Residues 417–433 (PEPDPGEPDPGEPDPGE) are compositionally biased toward acidic residues.

Belongs to the glycosyl hydrolase 5 (cellulase A) family.

It carries out the reaction Endohydrolysis of (1-&gt;4)-beta-D-glucosidic linkages in cellulose, lichenin and cereal beta-D-glucans.. The chain is Endoglucanase A (celA) from Evansella cellulosilytica (strain ATCC 21833 / DSM 2522 / FERM P-1141 / JCM 9156 / N-4) (Bacillus cellulosilyticus).